The following is a 120-amino-acid chain: DNA-binding protein HQ_1105A (120 aa).

The segment at 1 to 55 (MSETPDDLDELRQQRMEELRDQADGQQSQTSDNTAAAQEAAREKAEAQQEALLKQ) is disordered. Over residues 10 to 23 (ELRQQRMEELRDQA) the composition is skewed to basic and acidic residues. Positions 24-34 (DGQQSQTSDNT) are enriched in polar residues.

The protein belongs to the PDCD5 family.

In Haloquadratum walsbyi (strain DSM 16790 / HBSQ001), this protein is DNA-binding protein HQ_1105A.